The chain runs to 120 residues: UPF0344 protein LMOf2365_2298 (120 aa).

4 helical membrane passes run 3–23, 33–53, 62–82, and 92–112; these read GYIH…ALLI, MLQM…IMMV, ILAI…EMLL, and GMFL…GFYL.

The protein belongs to the UPF0344 family.

The protein resides in the cell membrane. In Listeria monocytogenes serotype 4b (strain F2365), this protein is UPF0344 protein LMOf2365_2298.